We begin with the raw amino-acid sequence, 1481 residues long: MALPREERSLHGHANIHVNQTTGPAIDKAESSDTIGADSEDGIEQEGQAKITTLARTLSRISQTNSGTEGLNPFLNTSDPELDPNSDQFNSRKWTKTLLHITSRDPERYPRRTAGVSFRNLNAFGYGTAADYQATVSNVWLKAAGWLRGLFGNGNKVRIDILRNFEGFVNSGEMLVVLGRPGSGCSTFLKTIAGETHGLWLDKGTDIQYQGISWDEMHSRFRGEVMYQAETEIHFPQLTAGDTLLFAAKARAPANRLPGVSRDQYATHMRDVVMAMLGLTHTMNTLVGNEFIRGVSGGERKRVSIAETTLCGSPLQCWDNSTRGLDSSTALEFVKNLRLSTDYTGSTAIVAIYQASQAIYDVFDKVIVLYEGRQIYFGRARDAKRFFIEMGFDCPERQTTGDFLTSLTSPTERLVRKGYEHLVPRTPDEFAARWRDSLERKQLLADIEAFQNEFPLGGSKKEEFSRSRAAEKAKNTRASSPYTLSYSMQIKLCLQRGFLRLKGDMSMTLSTVIGNSILALIISSVFYNLNETTDSYFSRGALLFFAILLNAFASALEMLTLWQQRPIVEKHDKYALYHPSAEAISSLIVDLPAKAPVSIVFNLILYFMTNLRRTPGHFFVFYLFSVTTTLTMSNVFRWIAAVSRSLAQAEVPASIFMMILMIYTGFTIPVRDMHPWFRWLNYINPIAYSFESLMINEFAGRKFHCATYVPSGPGYDNAPLDSKICSGKGAVAGQDYIDGDRYLEVAFEYYPSHLWRNFGILLGFLFFSLVAYIVASELVRAKPSKGEILVFPRGKIPAFAKKVHREADPEDVLTSEKLKVGSEQDDHVGAIVKQTSIFHWQDVCYDIKIKGQDRRILDHVDGWVKPGTLTALMGVTGAGKTSLLDVLANRVTMGVITGEMLVDGRMRDDSFQRKTGYVQQQDLHLETSTVREALIFSALLRQPASTPRKEKLAYVEEVIKMLNMEEYAEAVVGVLGEGLNVEQRKRLTIGVEIAAKPDLLLFFDEPTSGLDSQTAWSICSLMRKLVDHGQAILCTIHQPSAILMQQFDRLLFLAKGGKTVYFGDLGPNMRTLIKYFEDKGSPKCPPNANPAEWMLEVIGAAPGSRADQDWSDVWKHSRERAQVQQELLQMKQELLQRPQPPRTAGYGEFAMPLWAQFFICLQRVFQQYWRCPSYIYAKAAMCIIPPLFIGFTFWREPTSIQGMQNEMFSIFMLLVIFPNLVQQMMPYFAMQRSLYEVRERPSKAYSWKAFMLASIVVELPWNMLMAVPAYFCWYYPIGLFRNAYPTDSVTERGGTMFLLVLIFMLFTSTFSSMMIAGIDHPETASNIAQLMFSMCLIFCGVLASPDVLPRFWIFMWRASPFSYLVGSVLAVGIAGAPVHCSDIEVLHIPPPGGQNCSGYLEAFTTMAKSTLLNPEADSDCQVCSLSTTDQFLAGVHIKYSELWRNVGILFVYIVFNTVAAVFLYWLVRVPKKRALKKAKKE.

The segment covering 1–10 has biased composition (basic and acidic residues); that stretch reads MALPREERSL. Disordered regions lie at residues 1–45 and 61–89; these read MALP…GIEQ and ISQTNSGTEGLNPFLNTSDPELDPNSDQF. N-linked (GlcNAc...) asparagine glycosylation is found at Asn-19, Asn-76, and Asn-320. The ABC transporter 1 domain maps to 134 to 396; it reads ATVSNVWLKA…FIEMGFDCPE (263 aa). Residues 507–527 traverse the membrane as a helical segment; the sequence is MTLSTVIGNSILALIISSVFY. N-linked (GlcNAc...) asparagine glycosylation is present at Asn-530. 5 consecutive transmembrane segments (helical) span residues 542–562, 587–607, 616–636, 650–670, and 758–778; these read LLFFAILLNAFASALEMLTLW, LIVDLPAKAPVSIVFNLILYF, GHFFVFYLFSVTTTLTMSNVF, EVPASIFMMILMIYTGFTIPV, and FGILLGFLFFSLVAYIVASEL. The region spanning 838–1081 is the ABC transporter 2 domain; it reads FHWQDVCYDI…LIKYFEDKGS (244 aa). ATP is bound at residue 874–881; it reads GVTGAGKT. The next 6 helical transmembrane spans lie at 1174–1194, 1210–1230, 1249–1269, 1298–1318, 1327–1347, and 1358–1378; these read YIYAKAAMCIIPPLFIGFTFW, IFMLLVIFPNLVQQMMPYFAM, AFMLASIVVELPWNMLMAVPA, LLVLIFMLFTSTFSSMMIAGI, IAQLMFSMCLIFCGVLASPDV, and ASPFSYLVGSVLAVGIAGAPV. A glycan (N-linked (GlcNAc...) asparagine) is linked at Asn-1395. A helical transmembrane segment spans residues 1446-1466; it reads VGILFVYIVFNTVAAVFLYWL.

Belongs to the ABC transporter superfamily. ABCG family. PDR (TC 3.A.1.205) subfamily.

Its subcellular location is the cell membrane. Its function is as follows. Pleiotropic ABC efflux transporter involved in the basal level of azole susceptibility. The polypeptide is ABC multidrug transporter atrH (Aspergillus oryzae (strain ATCC 42149 / RIB 40) (Yellow koji mold)).